A 572-amino-acid polypeptide reads, in one-letter code: Secreted triacylglycerol lipase LIP6 (572 aa).

Positions 1 to 23 are cleaved as a signal peptide; it reads MYSTSLLRWLVVALVSAVPLVTA. C117 and C291 are oxidised to a cystine. The active-site Nucleophile is the S202. D351 is an active-site residue. N360 carries N-linked (GlcNAc...) asparagine glycosylation. Residue H385 is part of the active site. A disordered region spans residues 468–572; sequence KGGVWNDVLK…SSRRHVARFM (105 aa). The segment covering 491–511 has biased composition (basic and acidic residues); the sequence is PESKKATKKYKSESKAEKKQP. Residues 512–525 show a composition bias toward low complexity; sequence DSIPSSSSKSSSDN. Residue N525 is glycosylated (N-linked (GlcNAc...) asparagine). Over residues 528-540 the composition is skewed to basic residues; sequence AHAKYHAHGHGHG. Over residues 541–562 the composition is skewed to low complexity; sequence HASSNSNNGHSHSAKESSTSKG. Basic residues predominate over residues 563–572; it reads SSRRHVARFM.

Belongs to the AB hydrolase superfamily. Lipase family. Class Lip subfamily.

The protein localises to the secreted. Its subcellular location is the cell wall. It catalyses the reaction a triacylglycerol + H2O = a diacylglycerol + a fatty acid + H(+). The enzyme catalyses a monoacylglycerol + H2O = glycerol + a fatty acid + H(+). It carries out the reaction a diacylglycerol + H2O = a monoacylglycerol + a fatty acid + H(+). Secreted lipase involved in Dandruff and seborrheic dermatitis (D/SD) probably via lipase-mediated breakdown of sebaceous lipids and release of irritating free fatty acids. Shows only minimal activity against triolein. Mostly converts monoolein to di- and triolein, while free fatty acids are only produced in low amounts. The polypeptide is Secreted triacylglycerol lipase LIP6 (Malassezia globosa (strain ATCC MYA-4612 / CBS 7966) (Dandruff-associated fungus)).